The primary structure comprises 154 residues: Large ribosomal subunit protein uL13 (154 aa).

The protein belongs to the universal ribosomal protein uL13 family. As to quaternary structure, part of the 50S ribosomal subunit.

Its function is as follows. This protein is one of the early assembly proteins of the 50S ribosomal subunit, although it is not seen to bind rRNA by itself. It is important during the early stages of 50S assembly. This chain is Large ribosomal subunit protein uL13, found in Rhodopseudomonas palustris (strain BisB5).